A 343-amino-acid chain; its full sequence is Lumican (343 aa).

An N-terminal signal peptide occupies residues 1-18 (MTLNSLPIFLVLISGIFC). A Pyrrolidone carboxylic acid modification is found at Gln-19. A sulfotyrosine mark is found at Tyr-20 and Tyr-22. Residues 31–69 (DPFGPSTAVCAPECNCPLSYPTAMYCDNLKLKTIPIVPS) form the LRRNT domain. LRR repeat units lie at residues 70–91 (GIKYLYLRNNMIEAIEENTFDN), 94–117 (DLQWLILDHNHLENSKIKGRVFSK), 120–140 (NLKKLHINYNNLTEAVGPLPK), 141–162 (TLDDLQLSHNKITKVNPGALEG), 165–186 (NLTVIHLQNNQLKTDSISGAFK), 190–211 (SLLYLDLSFNQLTKLPTGLPHS), 212–232 (LLMLYFDNNQISNIPDEYFQG), and 235–255 (TLQYLRLSHNKLTDSGIPGNV). N-linked (GlcNAc...) (keratan sulfate) asparagine glycosylation occurs at Asn-91. Asn-130 is a glycosylation site (N-linked (GlcNAc...) (keratan sulfate) asparagine). The N-linked (GlcNAc...) (keratan sulfate) asparagine glycan is linked to Asn-165. A glycan (N-linked (GlcNAc...) (keratan sulfate) asparagine) is linked at Asn-257. LRR repeat units lie at residues 260–281 (SLVELDLSFNQLKSIPTVSENL), 282–301 (ENFYLQVNKINKFPLSSFCK), and 310–330 (KITHLRLDGNNLTRADLPQEM). Cysteines 300 and 333 form a disulfide. The N-linked (GlcNAc...) asparagine glycan is linked to Asn-320.

The protein belongs to the small leucine-rich proteoglycan (SLRP) family. SLRP class II subfamily. In terms of assembly, binds to laminin. Post-translationally, contains keratan sulfate. In terms of tissue distribution, cornea and other tissues.

It localises to the secreted. The protein localises to the extracellular space. It is found in the extracellular matrix. This Gallus gallus (Chicken) protein is Lumican (LUM).